A 160-amino-acid polypeptide reads, in one-letter code: 3-dehydroquinate dehydratase (160 aa).

The active-site Proton acceptor is the Tyr-28. Residues Asn-79, His-85, and Asp-92 each coordinate substrate. The Proton donor role is filled by His-105. Substrate is bound by residues 106–107 (MS) and Arg-116.

The protein belongs to the type-II 3-dehydroquinase family. As to quaternary structure, homododecamer.

The enzyme catalyses 3-dehydroquinate = 3-dehydroshikimate + H2O. It participates in metabolic intermediate biosynthesis; chorismate biosynthesis; chorismate from D-erythrose 4-phosphate and phosphoenolpyruvate: step 3/7. Catalyzes a trans-dehydration via an enolate intermediate. The polypeptide is 3-dehydroquinate dehydratase (Gloeobacter violaceus (strain ATCC 29082 / PCC 7421)).